An 879-amino-acid polypeptide reads, in one-letter code: DNA mismatch repair protein MutS (879 aa).

An ATP-binding site is contributed by 639 to 646 (GPNMGGKS).

The protein belongs to the DNA mismatch repair MutS family.

This protein is involved in the repair of mismatches in DNA. It is possible that it carries out the mismatch recognition step. This protein has a weak ATPase activity. This Aromatoleum aromaticum (strain DSM 19018 / LMG 30748 / EbN1) (Azoarcus sp. (strain EbN1)) protein is DNA mismatch repair protein MutS.